Reading from the N-terminus, the 274-residue chain is MAIHLYKTSTPSTRNGTVDSQVKSNPRNNLIYGQRRCGKGRNARGIITARHRGGGHKRLYRKIDFRRNEKDIYGRIVTIEYDPNRNAYICLIHYGDGEKRYILHPRGAIIGDTIVSGTEVPIKMGNALPLTDMPLGTAIHNIEITLGKGGQLARAAGAVAKLIAKEGKSATLKLPSGEVRLISKNCSATVGQVGNVGVNQKSLGRAGSKRWLGKRPVVRGVVMNPVDHPHGGGEGRAPIGRKKPTTPWGYPALGRRSRKRNKYSDNLILRRRSK.

2 disordered regions span residues 1-25 (MAIH…VKSN) and 224-274 (NPVD…RRSK). The span at 7-25 (KTSTPSTRNGTVDSQVKSN) shows a compositional bias: polar residues.

Belongs to the universal ribosomal protein uL2 family. Part of the 50S ribosomal subunit.

Its subcellular location is the plastid. The protein resides in the chloroplast. This chain is Large ribosomal subunit protein uL2cz (rpl2-A), found in Atropa belladonna (Belladonna).